Reading from the N-terminus, the 307-residue chain is Membrane protein insertase YidC 2 (307 aa).

Positions 1 to 23 (MKLTLNRILFSGLALSILLTLTG) are cleaved as a signal peptide. Residue cysteine 24 is the site of N-palmitoyl cysteine attachment. The S-diacylglycerol cysteine moiety is linked to residue cysteine 24. A run of 5 helical transmembrane segments spans residues 58-78 (LGYGLAIIIVTIIVRTLILPL), 135-155 (LGGIGCLPLLIQMPFFSAMYF), 179-199 (VLTAIIAALYFFQSWLSMMAV), 209-225 (TMMYTMPIMMIFMSFSL), and 231-251 (LYWLVGGFFSIIQQLITTYLL). The interval 263-307 (YAKNPPKAYQSTSSRKDVTPSQNMEQANLPKKIKSNRNAGKQRKR) is disordered. A compositionally biased stretch (polar residues) spans 271–288 (YQSTSSRKDVTPSQNMEQ). A compositionally biased stretch (basic residues) spans 293–307 (KKIKSNRNAGKQRKR).

This sequence belongs to the OXA1/ALB3/YidC family. Type 2 subfamily.

The protein resides in the cell membrane. Its function is as follows. Required for the insertion and/or proper folding and/or complex formation of integral membrane proteins into the membrane. Involved in integration of membrane proteins that insert both dependently and independently of the Sec translocase complex, as well as at least some lipoproteins. The sequence is that of Membrane protein insertase YidC 2 from Streptococcus pyogenes serotype M1.